A 440-amino-acid chain; its full sequence is NADH-quinone oxidoreductase subunit D 1 (440 aa).

It belongs to the complex I 49 kDa subunit family. In terms of assembly, NDH-1 is composed of 14 different subunits. Subunits NuoB, C, D, E, F, and G constitute the peripheral sector of the complex.

Its subcellular location is the cell membrane. It catalyses the reaction a quinone + NADH + 5 H(+)(in) = a quinol + NAD(+) + 4 H(+)(out). Its function is as follows. NDH-1 shuttles electrons from NADH, via FMN and iron-sulfur (Fe-S) centers, to quinones in the respiratory chain. The immediate electron acceptor for the enzyme in this species is believed to be a menaquinone. Couples the redox reaction to proton translocation (for every two electrons transferred, four hydrogen ions are translocated across the cytoplasmic membrane), and thus conserves the redox energy in a proton gradient. This chain is NADH-quinone oxidoreductase subunit D 1, found in Streptomyces griseus subsp. griseus (strain JCM 4626 / CBS 651.72 / NBRC 13350 / KCC S-0626 / ISP 5235).